A 468-amino-acid polypeptide reads, in one-letter code: Sushi repeat-containing protein SRPX2 (468 aa).

Positions 1 to 25 (MMTSPLTQRGALSLLLLLMPAVTPT) are cleaved as a signal peptide. Sushi domains are found at residues 72 to 122 (ATCY…YCRQ), 123 to 181 (IRCH…VCVD), and 265 to 324 (RRCP…VCTP). 4 disulfides stabilise this stretch: cysteine 74–cysteine 108, cysteine 94–cysteine 120, cysteine 125–cysteine 166, and cysteine 152–cysteine 179. Positions 180–264 (VDIDPPKIRC…SCKFIVKVQV (85 aa)) constitute an HYR domain. 2 cysteine pairs are disulfide-bonded: cysteine 267-cysteine 309 and cysteine 295-cysteine 322.

As to quaternary structure, forms homooligomers. Interacts with PLAUR (via the UPAR/Ly6 domains), ADAMTS4 and CTSB. Interacts with HGF; the interaction increases the mitogenic activity of HGF. Contains chondroitin sulfate chains. Expressed in angiogenic endothelial cells (at protein level).

It localises to the secreted. The protein localises to the cytoplasm. The protein resides in the cell surface. It is found in the synapse. Functionally, acts as a ligand for the urokinase plasminogen activator surface receptor. Plays a role in angiogenesis by inducing endothelial cell migration and the formation of vascular network (cords). Involved in cellular migration and adhesion. Increases the phosphorylation levels of FAK. Interacts with and increases the mitogenic activity of HGF. Promotes synapse formation. Required for ultrasonic vocalizations. This is Sushi repeat-containing protein SRPX2 (Srpx2) from Mus musculus (Mouse).